The sequence spans 68 residues: Serine rich endogenous peptide 22 (68 aa).

A signal peptide spans 1–25; it reads MNKALVWLITLLFLIFSATPNRVLA. An SCOOP motif motif is present at residues 50–64; it reads KIGVGASNSGHSPGA. The short motif at 56-58 is the SxS motif essential for MIK2 binding element; sequence SNS.

It belongs to the serine rich endogenous peptide (SCOOP) phytocytokine family. Interacts with MIK2 (via extracellular leucine-rich repeat domain); this interaction triggers the formation of complex between MIK2 and the BAK1/SERK3 and SERK4 coreceptors, and subsequent BAK1 activation by phosphorylation.

It localises to the cell membrane. The protein localises to the secreted. Its subcellular location is the extracellular space. The protein resides in the apoplast. Its function is as follows. Brassicaceae-specific phytocytokine (plant endogenous peptide released into the apoplast) perceived by MIK2 in a BAK1/SERK3 and SERK4 coreceptors-dependent manner, that modulates various physiological and antimicrobial processes including growth prevention and reactive oxygen species (ROS) response regulation. This Arabidopsis thaliana (Mouse-ear cress) protein is Serine rich endogenous peptide 22.